Reading from the N-terminus, the 78-residue chain is U5-ctenitoxin-Pk1a (78 aa).

Disulfide bonds link C6-C23, C13-C29, C20-C52, C22-C40, C31-C38, C58-C73, and C69-C77.

In terms of tissue distribution, expressed by the venom gland.

It is found in the secreted. Lethal neurotoxin. Causes spastic paralysis and death in mice in 4-6 minutes after intracerebroventricular injection at dose levels of 1.5 ug per mouse. The protein is U5-ctenitoxin-Pk1a of Phoneutria keyserlingi (Brazilian wandering spider).